Reading from the N-terminus, the 294-residue chain is Nucleotide-binding protein Tfu_2020 (294 aa).

Residue 18-25 participates in ATP binding; it reads GMSGAGRS. A GTP-binding site is contributed by 69–72; that stretch reads DVRS.

Belongs to the RapZ-like family.

Its function is as follows. Displays ATPase and GTPase activities. The protein is Nucleotide-binding protein Tfu_2020 of Thermobifida fusca (strain YX).